The primary structure comprises 286 residues: Pantothenate synthetase (286 aa).

Position 30–37 (30–37 (MGNLHSGH)) interacts with ATP. The active-site Proton donor is His37. Position 61 (Gln61) interacts with (R)-pantoate. Gln61 serves as a coordination point for beta-alanine. ATP is bound at residue 149 to 152 (GQKD). Gln155 provides a ligand contact to (R)-pantoate. ATP-binding positions include Val178 and 186–189 (LSSR).

This sequence belongs to the pantothenate synthetase family. Homodimer.

The protein resides in the cytoplasm. The catalysed reaction is (R)-pantoate + beta-alanine + ATP = (R)-pantothenate + AMP + diphosphate + H(+). Its pathway is cofactor biosynthesis; (R)-pantothenate biosynthesis; (R)-pantothenate from (R)-pantoate and beta-alanine: step 1/1. Catalyzes the condensation of pantoate with beta-alanine in an ATP-dependent reaction via a pantoyl-adenylate intermediate. This Pseudomonas fluorescens (strain Pf0-1) protein is Pantothenate synthetase.